We begin with the raw amino-acid sequence, 67 residues long: DNA gyrase inhibitor YacG (67 aa).

C10, C13, C29, and C33 together coordinate Zn(2+). Residues 44-57 (EEKRIPSSGDRSDT) show a composition bias toward basic and acidic residues. The interval 44–67 (EEKRIPSSGDRSDTDGWSEEENQP) is disordered.

The protein belongs to the DNA gyrase inhibitor YacG family. As to quaternary structure, interacts with GyrB. It depends on Zn(2+) as a cofactor.

In terms of biological role, inhibits all the catalytic activities of DNA gyrase by preventing its interaction with DNA. Acts by binding directly to the C-terminal domain of GyrB, which probably disrupts DNA binding by the gyrase. This is DNA gyrase inhibitor YacG from Cronobacter sakazakii (strain ATCC BAA-894) (Enterobacter sakazakii).